The chain runs to 645 residues: Aspartate--tRNA ligase, mitochondrial (645 aa).

A mitochondrion-targeting transit peptide spans 1–47 (MYFPSWLSQLYRGLSRPIRRTTQPIWGSLYRSLLQSSQRRIPEFSSF). Thr219 bears the Phosphothreonine mark. The residue at position 242 (Ser242) is a Phosphoserine. The aspartate stretch occupies residues 244 to 247 (QQFK). Position 266 (Arg266) interacts with L-aspartate. 266-268 (RDE) contributes to the ATP binding site. Lys382 carries the N6-acetyllysine modification. Glu535 lines the ATP pocket. Residue Arg542 participates in L-aspartate binding. Position 584-587 (584-587 (GLDR)) interacts with ATP.

This sequence belongs to the class-II aminoacyl-tRNA synthetase family. Type 1 subfamily. As to quaternary structure, homodimer.

The protein resides in the mitochondrion matrix. The protein localises to the mitochondrion membrane. The catalysed reaction is tRNA(Asp) + L-aspartate + ATP = L-aspartyl-tRNA(Asp) + AMP + diphosphate. Catalyzes the attachment of aspartate to tRNA(Asp) in a two-step reaction: aspartate is first activated by ATP to form Asp-AMP and then transferred to the acceptor end of tRNA(Asp). The polypeptide is Aspartate--tRNA ligase, mitochondrial (DARS2) (Homo sapiens (Human)).